Consider the following 159-residue polypeptide: Capsid protein (159 aa).

Belongs to the virgaviridae capsid protein family.

It is found in the virion. Its function is as follows. Capsid protein self-assembles to form rod-shaped virions about 18 nm in diameter with a central canal enclosing the viral genomic RNA. The chain is Capsid protein (CP) from Tomato mosaic virus (strain Kazakh K1) (ToMV).